A 570-amino-acid polypeptide reads, in one-letter code: Enhancer of polycomb-like protein 1 (570 aa).

Positions 541-570 are disordered; the sequence is ALNNLNSGQTSGQTMGSNPGPGAIAPTPET. Polar residues predominate over residues 543–557; the sequence is NNLNSGQTSGQTMGS.

Belongs to the enhancer of polycomb family. Component of the NuA4 histone acetyltransferase complex.

The protein resides in the nucleus. Functionally, component of the NuA4 histone acetyltransferase complex which is involved in transcriptional activation of selected genes principally by acetylation of nucleosomal histone H4 and H2A. The NuA4 complex is also involved in DNA repair. Involved in gene silencing by neighboring heterochromatin, blockage of the silencing spreading along the chromosome, and required for cell cycle progression through G2/M. The sequence is that of Enhancer of polycomb-like protein 1 (epl1) from Emericella nidulans (strain FGSC A4 / ATCC 38163 / CBS 112.46 / NRRL 194 / M139) (Aspergillus nidulans).